A 150-amino-acid polypeptide reads, in one-letter code: Meiotically up-regulated gene 108 protein (150 aa).

Residues 1-11 (MANRFTSSDQT) are compositionally biased toward polar residues. A disordered region spans residues 1 to 150 (MANRFTSSDQ…RDISLLGSTI (150 aa)). Residues 12–23 (QETHGHHVDKHS) show a composition bias toward basic and acidic residues. The segment covering 83–93 (NRSSQHTGRVN) has biased composition (polar residues).

The protein resides in the cytoplasm. It localises to the nucleus. Functionally, has a role in meiosis. The protein is Meiotically up-regulated gene 108 protein (mug108) of Schizosaccharomyces pombe (strain 972 / ATCC 24843) (Fission yeast).